Consider the following 890-residue polypeptide: DNA mismatch repair protein MutS (890 aa).

607–614 serves as a coordination point for ATP; sequence GPNMSGKS.

This sequence belongs to the DNA mismatch repair MutS family.

Its function is as follows. This protein is involved in the repair of mismatches in DNA. It is possible that it carries out the mismatch recognition step. This protein has a weak ATPase activity. This chain is DNA mismatch repair protein MutS, found in Bacillus mycoides (strain KBAB4) (Bacillus weihenstephanensis).